The primary structure comprises 196 residues: Neurensin-1 (196 aa).

2 consecutive transmembrane segments (helical) span residues 67 to 87 and 121 to 141; these read LISG…GFLV and AVLF…SVFA.

It belongs to the VMP family. In terms of tissue distribution, expressed predominantly in brain. Also weakly expressed in lung and spleen. In brain, expressed strongly in nerve fibers of the cerebral cortex, anterior cerebral nuclei, hypothalamus, amygdaloid complex, brain stem of the metaencephalon and medulla oblongata, and moderately expressed in soma of neurons of the dentate gyrus of the hippocampus and Purkinje cells of the cerebellum.

It localises to the membrane. Its subcellular location is the cell projection. The protein resides in the neuron projection. May play an important role in neural organelle transport, and in transduction of nerve signals or in nerve growth. May play a role in neurite extension. The chain is Neurensin-1 from Mus musculus (Mouse).